Reading from the N-terminus, the 449-residue chain is Glucose-6-phosphate isomerase (449 aa).

E291 serves as the catalytic Proton donor. Residues H312 and K426 contribute to the active site.

Belongs to the GPI family.

Its subcellular location is the cytoplasm. It carries out the reaction alpha-D-glucose 6-phosphate = beta-D-fructose 6-phosphate. It participates in carbohydrate biosynthesis; gluconeogenesis. Its pathway is carbohydrate degradation; glycolysis; D-glyceraldehyde 3-phosphate and glycerone phosphate from D-glucose: step 2/4. Catalyzes the reversible isomerization of glucose-6-phosphate to fructose-6-phosphate. This Streptococcus mutans serotype c (strain ATCC 700610 / UA159) protein is Glucose-6-phosphate isomerase.